A 640-amino-acid polypeptide reads, in one-letter code: Threonine--tRNA ligase (640 aa).

The 61-residue stretch at 1–61 (MPVVTLPDGS…DKDSHLAIIT (61 aa)) folds into the TGS domain. The tract at residues 242–533 (DHRRLGKQLD…LIENHAGNMP (292 aa)) is catalytic. Residues Cys333, His384, and His510 each coordinate Zn(2+).

Belongs to the class-II aminoacyl-tRNA synthetase family. As to quaternary structure, homodimer. Requires Zn(2+) as cofactor.

The protein resides in the cytoplasm. The enzyme catalyses tRNA(Thr) + L-threonine + ATP = L-threonyl-tRNA(Thr) + AMP + diphosphate + H(+). Catalyzes the attachment of threonine to tRNA(Thr) in a two-step reaction: L-threonine is first activated by ATP to form Thr-AMP and then transferred to the acceptor end of tRNA(Thr). Also edits incorrectly charged L-seryl-tRNA(Thr). This is Threonine--tRNA ligase from Polynucleobacter asymbioticus (strain DSM 18221 / CIP 109841 / QLW-P1DMWA-1) (Polynucleobacter necessarius subsp. asymbioticus).